Here is a 179-residue protein sequence, read N- to C-terminus: MLRFKELYKQKIIESLKKEFSFKNKHEIPKIKKIVINMGVGEAIADSKVINNALNDLTLISGQKPVVTLARKSIATFKLRENMKIGCKVTLRKDRMYDFLERLVIVALPRVKEFRGFSYKSFDGKGNFTFGLKEQIVFPEINYDKIDTIRGMDITIVTSAKTDQESKFLLSGFNLPFYN.

The protein belongs to the universal ribosomal protein uL5 family. In terms of assembly, part of the 50S ribosomal subunit; part of the 5S rRNA/L5/L18/L25 subcomplex. Contacts the 5S rRNA and the P site tRNA. Forms a bridge to the 30S subunit in the 70S ribosome.

In terms of biological role, this is one of the proteins that bind and probably mediate the attachment of the 5S RNA into the large ribosomal subunit, where it forms part of the central protuberance. In the 70S ribosome it contacts protein S13 of the 30S subunit (bridge B1b), connecting the 2 subunits; this bridge is implicated in subunit movement. Contacts the P site tRNA; the 5S rRNA and some of its associated proteins might help stabilize positioning of ribosome-bound tRNAs. The sequence is that of Large ribosomal subunit protein uL5 from Rickettsia prowazekii (strain Madrid E).